Reading from the N-terminus, the 418-residue chain is Glutamyl-tRNA reductase (418 aa).

Substrate-binding positions include 49–52 (TCNR), S109, 114–116 (EPQ), and Q120. C50 acts as the Nucleophile in catalysis. Position 189 to 194 (189 to 194 (GAGETI)) interacts with NADP(+).

The protein belongs to the glutamyl-tRNA reductase family. As to quaternary structure, homodimer.

The catalysed reaction is (S)-4-amino-5-oxopentanoate + tRNA(Glu) + NADP(+) = L-glutamyl-tRNA(Glu) + NADPH + H(+). The protein operates within porphyrin-containing compound metabolism; protoporphyrin-IX biosynthesis; 5-aminolevulinate from L-glutamyl-tRNA(Glu): step 1/2. Functionally, catalyzes the NADPH-dependent reduction of glutamyl-tRNA(Glu) to glutamate 1-semialdehyde (GSA). In Salmonella heidelberg (strain SL476), this protein is Glutamyl-tRNA reductase.